We begin with the raw amino-acid sequence, 172 residues long: Adenine phosphoribosyltransferase (172 aa).

This sequence belongs to the purine/pyrimidine phosphoribosyltransferase family. In terms of assembly, homodimer.

It is found in the cytoplasm. The enzyme catalyses AMP + diphosphate = 5-phospho-alpha-D-ribose 1-diphosphate + adenine. Its pathway is purine metabolism; AMP biosynthesis via salvage pathway; AMP from adenine: step 1/1. Its function is as follows. Catalyzes a salvage reaction resulting in the formation of AMP, that is energically less costly than de novo synthesis. The protein is Adenine phosphoribosyltransferase of Streptococcus equi subsp. zooepidemicus (strain H70).